Consider the following 131-residue polypeptide: Glycine cleavage system H protein (131 aa).

Residues 24 to 106 (RAIVGISDHA…YGEGWIMVIE (83 aa)) form the Lipoyl-binding domain. K65 is subject to N6-lipoyllysine.

It belongs to the GcvH family. In terms of assembly, the glycine cleavage system is composed of four proteins: P, T, L and H. Requires (R)-lipoate as cofactor.

The glycine cleavage system catalyzes the degradation of glycine. The H protein shuttles the methylamine group of glycine from the P protein to the T protein. The sequence is that of Glycine cleavage system H protein from Xylella fastidiosa (strain M12).